A 167-amino-acid polypeptide reads, in one-letter code: Large ribosomal subunit protein uL23 (167 aa).

A large ribosomal subunit protein uL23 region spans residues 1–130; the sequence is MNVNEIIKGP…ELEAKNKEIA (130 aa). Disordered regions lie at residues 91 to 112 and 137 to 167; these read FEDE…TDEK and QAEL…NSAK. Basic and acidic residues-rich tracts occupy residues 97–112 and 137–157; these read QDQK…TDEK and QAEL…KIEN. Positions 131-167 are unknown; the sequence is EKLAKKQAELAKKESETNENQEKKIENQTENQENSAK. The segment covering 158 to 167 has biased composition (polar residues); the sequence is QTENQENSAK.

Belongs to the universal ribosomal protein uL23 family. Part of the 50S ribosomal subunit. Contacts protein L29, and trigger factor when it is bound to the ribosome.

In terms of biological role, one of the early assembly proteins it binds 23S rRNA. One of the proteins that surrounds the polypeptide exit tunnel on the outside of the ribosome. Forms the main docking site for trigger factor binding to the ribosome. The protein is Large ribosomal subunit protein uL23 of Mesomycoplasma hyopneumoniae (strain 7448) (Mycoplasma hyopneumoniae).